A 351-amino-acid chain; its full sequence is Histidinol-phosphate aminotransferase (351 aa).

Lysine 221 bears the N6-(pyridoxal phosphate)lysine mark.

This sequence belongs to the class-II pyridoxal-phosphate-dependent aminotransferase family. Histidinol-phosphate aminotransferase subfamily. As to quaternary structure, homodimer. Requires pyridoxal 5'-phosphate as cofactor.

It carries out the reaction L-histidinol phosphate + 2-oxoglutarate = 3-(imidazol-4-yl)-2-oxopropyl phosphate + L-glutamate. The protein operates within amino-acid biosynthesis; L-histidine biosynthesis; L-histidine from 5-phospho-alpha-D-ribose 1-diphosphate: step 7/9. In Staphylococcus epidermidis (strain ATCC 35984 / DSM 28319 / BCRC 17069 / CCUG 31568 / BM 3577 / RP62A), this protein is Histidinol-phosphate aminotransferase.